The following is a 186-amino-acid chain: uncharacterized protein (186 aa).

3 helical membrane passes run 42 to 62, 80 to 100, and 131 to 151; these read ISIA…LSVL, LLFL…IGLV, and ICGI…FIVL.

It to U.parvum UU008, UU041 and UU042.

It is found in the cell membrane. This is an uncharacterized protein from Ureaplasma parvum serovar 3 (strain ATCC 700970).